The following is a 287-amino-acid chain: Bifunctional protein FolD (287 aa).

Residues 166–168 (GAS) and isoleucine 232 each bind NADP(+).

This sequence belongs to the tetrahydrofolate dehydrogenase/cyclohydrolase family. In terms of assembly, homodimer.

It catalyses the reaction (6R)-5,10-methylene-5,6,7,8-tetrahydrofolate + NADP(+) = (6R)-5,10-methenyltetrahydrofolate + NADPH. The catalysed reaction is (6R)-5,10-methenyltetrahydrofolate + H2O = (6R)-10-formyltetrahydrofolate + H(+). It functions in the pathway one-carbon metabolism; tetrahydrofolate interconversion. Its function is as follows. Catalyzes the oxidation of 5,10-methylenetetrahydrofolate to 5,10-methenyltetrahydrofolate and then the hydrolysis of 5,10-methenyltetrahydrofolate to 10-formyltetrahydrofolate. This is Bifunctional protein FolD from Chromohalobacter salexigens (strain ATCC BAA-138 / DSM 3043 / CIP 106854 / NCIMB 13768 / 1H11).